Here is a 180-residue protein sequence, read N- to C-terminus: Probable macrolide acetyltransferase (180 aa).

It belongs to the transferase hexapeptide repeat family.

In Lysinibacillus sphaericus (Bacillus sphaericus), this protein is Probable macrolide acetyltransferase.